The primary structure comprises 276 residues: Radial spoke head protein 9 homolog (276 aa).

The protein belongs to the flagellar radial spoke RSP9 family. In terms of assembly, component of the axonemal radial spoke 1 (RS1) and 2 (RS2) complexes, at least composed of spoke head proteins RSPH1, RSPH3, RSPH9 and the cilia-specific component RSPH4A or sperm-specific component RSPH6A, spoke stalk proteins RSPH14, DNAJB13, DYDC1, ROPN1L and NME5, and the RS1 complex-specific anchor protein IQUB. Interacts with IQUB. Interacts with RSPH3B. Interacts with RSPH4A. Interacts with RSPH6A. Interacts with CFAP61. Interacts with LRRC23.

It is found in the cytoplasm. The protein localises to the cytoskeleton. Its subcellular location is the cilium axoneme. It localises to the flagellum axoneme. The protein resides in the cell projection. It is found in the kinocilium. Functions as part of axonemal radial spoke complexes that play an important part in the motility of sperm and cilia. Essential for both the radial spoke head assembly and the central pair microtubule stability in ependymal motile cilia. Required for motility of olfactory and neural cilia and for the structural integrity of ciliary axonemes in both 9+0 and 9+2 motile cilia. This is Radial spoke head protein 9 homolog (RSPH9) from Bos taurus (Bovine).